The chain runs to 325 residues: tRNA N6-adenosine threonylcarbamoyltransferase (325 aa).

The Fe cation site is built by His-111 and His-115. Residues 134 to 138 (LISGG), Asp-167, Gly-180, and Asn-277 contribute to the substrate site. Asp-305 lines the Fe cation pocket.

The protein belongs to the KAE1 / TsaD family. The cofactor is Fe(2+).

The protein resides in the cytoplasm. It localises to the secreted. It carries out the reaction L-threonylcarbamoyladenylate + adenosine(37) in tRNA = N(6)-L-threonylcarbamoyladenosine(37) in tRNA + AMP + H(+). In terms of biological role, required for the formation of a threonylcarbamoyl group on adenosine at position 37 (t(6)A37) in tRNAs that read codons beginning with adenine. Is involved in the transfer of the threonylcarbamoyl moiety of threonylcarbamoyl-AMP (TC-AMP) to the N6 group of A37, together with TsaE and TsaB. TsaD likely plays a direct catalytic role in this reaction. The polypeptide is tRNA N6-adenosine threonylcarbamoyltransferase (Mannheimia haemolytica (Pasteurella haemolytica)).